Reading from the N-terminus, the 163-residue chain is Large ribosomal subunit protein uL11 (163 aa).

The protein belongs to the universal ribosomal protein uL11 family. Part of the ribosomal stalk of the 50S ribosomal subunit. Interacts with L10 and the large rRNA to form the base of the stalk. L10 forms an elongated spine to which L12 dimers bind in a sequential fashion forming a multimeric L10(L12)X complex.

In terms of biological role, forms part of the ribosomal stalk which helps the ribosome interact with GTP-bound translation factors. In Thermococcus onnurineus (strain NA1), this protein is Large ribosomal subunit protein uL11.